Reading from the N-terminus, the 127-residue chain is MLKKIIFGITISLTTGCFANSTASNLSKKDVAKTNDVNTQKIIDDFSVYAGTIKPEVREEIQKYRVEIVDINKKKRELYNRLSKEAQSFLAEQQKYKQKLSIPKLLIENDPKNNTANSKDNNDKDMK.

Residues 1–16 form the signal peptide; sequence MLKKIIFGITISLTTG. A lipid anchor (N-palmitoyl cysteine) is attached at C17. C17 carries the S-diacylglycerol cysteine lipid modification. The stretch at 56 to 101 forms a coiled coil; the sequence is EVREEIQKYRVEIVDINKKKRELYNRLSKEAQSFLAEQQKYKQKLS. Residues 102–127 form a disordered region; it reads IPKLLIENDPKNNTANSKDNNDKDMK.

Its subcellular location is the cell membrane. This is an uncharacterized protein from Rickettsia prowazekii (strain Madrid E).